Reading from the N-terminus, the 152-residue chain is Protein SprT-like (152 aa).

Residues 13 to 148 (NYVKKVSIED…FACGYCHGRL (136 aa)) form the SprT-like domain. His-72 lines the Zn(2+) pocket. The active site involves Glu-73. Residue His-76 participates in Zn(2+) binding.

The protein belongs to the SprT family. Zn(2+) serves as cofactor.

It localises to the cytoplasm. The polypeptide is Protein SprT-like (Streptococcus agalactiae serotype III (strain NEM316)).